A 271-amino-acid polypeptide reads, in one-letter code: ATP synthase subunit a (271 aa).

Transmembrane regions (helical) follow at residues 40-60, 100-120, 146-166, 220-240, and 242-262; these read TINIDSMFFSVGLGLLFLVLF, LIAPLALTIFVWVFLMNLMDL, DVNVTLSMALGVFILILFYSI, LIFILIAGLLPWWSQWILNVP, and AIFHILIITLQAFIFMVLTIV.

It belongs to the ATPase A chain family. As to quaternary structure, F-type ATPases have 2 components, CF(1) - the catalytic core - and CF(0) - the membrane proton channel. CF(1) has five subunits: alpha(3), beta(3), gamma(1), delta(1), epsilon(1). CF(0) has three main subunits: a(1), b(2) and c(9-12). The alpha and beta chains form an alternating ring which encloses part of the gamma chain. CF(1) is attached to CF(0) by a central stalk formed by the gamma and epsilon chains, while a peripheral stalk is formed by the delta and b chains.

The protein localises to the cell inner membrane. In terms of biological role, key component of the proton channel; it plays a direct role in the translocation of protons across the membrane. The polypeptide is ATP synthase subunit a (Shigella dysenteriae serotype 1 (strain Sd197)).